We begin with the raw amino-acid sequence, 118 residues long: Large ribosomal subunit protein uL18 (118 aa).

It belongs to the universal ribosomal protein uL18 family. As to quaternary structure, part of the 50S ribosomal subunit; part of the 5S rRNA/L5/L18/L25 subcomplex. Contacts the 5S and 23S rRNAs.

In terms of biological role, this is one of the proteins that bind and probably mediate the attachment of the 5S RNA into the large ribosomal subunit, where it forms part of the central protuberance. This is Large ribosomal subunit protein uL18 from Rickettsia conorii (strain ATCC VR-613 / Malish 7).